Here is a 216-residue protein sequence, read N- to C-terminus: Adenylate kinase (216 aa).

Position 10–15 (10–15 (GAGKGT)) interacts with ATP. The NMP stretch occupies residues 30 to 59 (STGDIFRANIKEKTPLGIEAKRYMDNGQLV). AMP is bound by residues threonine 31, arginine 36, 57-59 (QLV), 85-88 (GFPR), and glutamine 92. Residues 126-163 (GRRVCTSCGASYHIRFNPPKIEGKCDICDNELIQRKDD) form an LID region. Arginine 127 serves as a coordination point for ATP. Residues cysteine 130 and cysteine 133 each coordinate Zn(2+). Residue 136–137 (SY) coordinates ATP. Cysteine 150 and cysteine 153 together coordinate Zn(2+). Residues arginine 160 and arginine 171 each contribute to the AMP site. Glutamate 199 is an ATP binding site.

It belongs to the adenylate kinase family. As to quaternary structure, monomer.

The protein localises to the cytoplasm. The enzyme catalyses AMP + ATP = 2 ADP. The protein operates within purine metabolism; AMP biosynthesis via salvage pathway; AMP from ADP: step 1/1. Functionally, catalyzes the reversible transfer of the terminal phosphate group between ATP and AMP. Plays an important role in cellular energy homeostasis and in adenine nucleotide metabolism. The polypeptide is Adenylate kinase (Clostridium botulinum (strain Loch Maree / Type A3)).